A 313-amino-acid chain; its full sequence is MAGHTVVQRALPNIASGSFAQSASKTSSHTSKTSYSAVVTPPSSDGNPNVWRANHLPDGLIYIIVGGTAAAIFAFIILWYAVARYMSRRVAKKTMYETNIQWRDTPSSGLYDHGDEKELYQSLVDHSDKNDARPKKSLIGLLGGGNGLGSSTSYDTVADADMDDDLIGGGYQERFNPVQDFVPSHFPRSSLFISPTLEVAQQNQQSKSVGRTNHFQNLSVTSLPSASESSSNLLDRPERTASPERKPKAYGRYHQRNRSSVGVSDHSHSRSHSRSKSASSFEMPNVNNNNKKHGTTPSRFLNNLLEGNDDGTT.

The span at 22-37 (SASKTSSHTSKTSYSA) shows a compositional bias: low complexity. The interval 22–48 (SASKTSSHTSKTSYSAVVTPPSSDGNP) is disordered. Residues 59–79 (GLIYIIVGGTAAAIFAFIILW) form a helical membrane-spanning segment. The segment covering 221 to 234 (TSLPSASESSSNLL) has biased composition (low complexity). The segment at 221–313 (TSLPSASESS…LLEGNDDGTT (93 aa)) is disordered. A compositionally biased stretch (basic and acidic residues) spans 235–247 (DRPERTASPERKP). The span at 248–257 (KAYGRYHQRN) shows a compositional bias: basic residues. Over residues 285 to 301 (NVNNNNKKHGTTPSRFL) the composition is skewed to polar residues.

It belongs to the PRM5 family.

The protein resides in the vacuole membrane. The chain is Vacuolar membrane protein ZYRO0A01628g from Zygosaccharomyces rouxii (strain ATCC 2623 / CBS 732 / NBRC 1130 / NCYC 568 / NRRL Y-229).